Reading from the N-terminus, the 274-residue chain is 3-methyl-2-oxobutanoate hydroxymethyltransferase (274 aa).

Residues Asp49 and Asp88 each contribute to the Mg(2+) site. Residues 49–50 (DS), Asp88, and Lys118 contribute to the 3-methyl-2-oxobutanoate site. A Mg(2+)-binding site is contributed by Glu120. The active-site Proton acceptor is the Glu187.

The protein belongs to the PanB family. As to quaternary structure, homodecamer; pentamer of dimers. The cofactor is Mg(2+).

Its subcellular location is the cytoplasm. It carries out the reaction 3-methyl-2-oxobutanoate + (6R)-5,10-methylene-5,6,7,8-tetrahydrofolate + H2O = 2-dehydropantoate + (6S)-5,6,7,8-tetrahydrofolate. Its pathway is cofactor biosynthesis; (R)-pantothenate biosynthesis; (R)-pantoate from 3-methyl-2-oxobutanoate: step 1/2. Its function is as follows. Catalyzes the reversible reaction in which hydroxymethyl group from 5,10-methylenetetrahydrofolate is transferred onto alpha-ketoisovalerate to form ketopantoate. This chain is 3-methyl-2-oxobutanoate hydroxymethyltransferase, found in Rhodopseudomonas palustris (strain ATCC BAA-98 / CGA009).